The primary structure comprises 246 residues: Octanoyltransferase (246 aa).

One can recognise a BPL/LPL catalytic domain in the interval 38–213 (AQQSDEFWVL…FLAKRLGLTP (176 aa)). Substrate contacts are provided by residues 77-84 (RGGQVTYH), 144-146 (SLG), and 157-159 (GLA). Cys-175 serves as the catalytic Acyl-thioester intermediate. Positions 225 to 246 (RQENVTTGGDPGSALTQQPERL) are disordered.

The protein belongs to the LipB family.

It is found in the cytoplasm. It catalyses the reaction octanoyl-[ACP] + L-lysyl-[protein] = N(6)-octanoyl-L-lysyl-[protein] + holo-[ACP] + H(+). It functions in the pathway protein modification; protein lipoylation via endogenous pathway; protein N(6)-(lipoyl)lysine from octanoyl-[acyl-carrier-protein]: step 1/2. In terms of biological role, catalyzes the transfer of endogenously produced octanoic acid from octanoyl-acyl-carrier-protein onto the lipoyl domains of lipoate-dependent enzymes. Lipoyl-ACP can also act as a substrate although octanoyl-ACP is likely to be the physiological substrate. The protein is Octanoyltransferase of Alcanivorax borkumensis (strain ATCC 700651 / DSM 11573 / NCIMB 13689 / SK2).